Consider the following 227-residue polypeptide: UPF0758 protein lpp2553 (227 aa).

The region spanning 102-225 (RLSNTQQTYA…YSIFAENKWV (124 aa)) is the MPN domain. Zn(2+)-binding residues include His173, His175, and Asp186. Residues 173-186 (HNHPSGLSDASQQD) carry the JAMM motif motif.

Belongs to the UPF0758 family.

This Legionella pneumophila (strain Paris) protein is UPF0758 protein lpp2553.